The primary structure comprises 432 residues: Neuronal pentraxin-1 (432 aa).

A signal peptide spans 1–22 (MPAGRAARTCALLALCLLGAGA). The segment at 90–122 (ESQSTLDPGAGEARAGGGRKQPGSGKNTMGDLS) is disordered. N-linked (GlcNAc...) asparagine glycosylation is found at asparagine 154 and asparagine 193. Positions 226–428 (DKFQLTFPLR…GATKWTFEAC (203 aa)) constitute a Pentraxin (PTX) domain. Residues cysteine 256 and cysteine 316 are joined by a disulfide bond. Residues asparagine 280, glutamate 358, glutamine 359, aspartate 360, and glutamine 370 each contribute to the Ca(2+) site.

Homooligomer or heterooligomer (probably pentamer) with neuronal pentraxin receptor (NPTXR). Requires Ca(2+) as cofactor.

It localises to the secreted. Its subcellular location is the cytoplasmic vesicle. The protein localises to the secretory vesicle. It is found in the endoplasmic reticulum. Functionally, may be involved in mediating uptake of synaptic material during synapse remodeling or in mediating the synaptic clustering of AMPA glutamate receptors at a subset of excitatory synapses. This Homo sapiens (Human) protein is Neuronal pentraxin-1 (NPTX1).